Reading from the N-terminus, the 323-residue chain is MAEERSLNGEATGQDDESFFDSDQQGDDGKSTELNQKIGDLESQNQELARDNDAINRKIESLTAEIEELRGAESKAKRKMGEMEREIDKSDEERKVLEAIASRASELETEVARLQHELITARTEGEEATAEAEKLRSEISQKGGGIEELEKEVAGLRTVKEENEKRMKELESKLGALEVKELDEKNKKFRAEEEMREKIDNKEKEVHDLKEKIKSLESDVAKGKTELQKWITEKMVVEDSLKDSEKKVVALESEIVELQKQLDDAEKMINGLKNVVEEPLNGIEFKSWSPNVTAVGSGGAVAAVAVAVAGAAVVCYIYHSRRV.

3 disordered regions span residues 1–55 (MAEE…NDAI), 73–92 (ESKAKRKMGEMEREIDKSDE), and 120–143 (TARTEGEEATAEAEKLRSEISQKG). The Cytoplasmic segment spans residues 1 to 297 (MAEERSLNGE…WSPNVTAVGS (297 aa)). The segment covering 13 to 26 (GQDDESFFDSDQQG) has biased composition (acidic residues). The stretch at 28–278 (DGKSTELNQK…INGLKNVVEE (251 aa)) forms a coiled coil. The chain crosses the membrane as a helical span at residues 298–318 (GGAVAAVAVAVAGAAVVCYIY). Over 319–323 (HSRRV) the chain is Mitochondrial intermembrane.

Homodimer. Interacts with PMD1.

It is found in the mitochondrion outer membrane. Functionally, involved in morphogenesis and proliferation of mitochondria. Does not act redundantly with PMD1. Is not involved in peroxisomal proliferation. This chain is Peroxisomal and mitochondrial division factor 2, found in Arabidopsis thaliana (Mouse-ear cress).